A 115-amino-acid chain; its full sequence is Large ribosomal subunit protein bL21 (115 aa).

Belongs to the bacterial ribosomal protein bL21 family. In terms of assembly, part of the 50S ribosomal subunit. Contacts protein L20.

Its function is as follows. This protein binds to 23S rRNA in the presence of protein L20. In Coxiella burnetii (strain Dugway 5J108-111), this protein is Large ribosomal subunit protein bL21.